The sequence spans 218 residues: 25.3 kDa vesicle transport protein SEC22-1 (218 aa).

Residues 1-192 lie on the Cytoplasmic side of the membrane; that stretch reads MVKMTLIARV…DKAKDLNRQA (192 aa). Residues 6–120 form the Longin domain; it reads LIARVTDGLP…YAFIKFDTFI (115 aa). The region spanning 135 to 195 is the v-SNARE coiled-coil homology domain; sequence NIAKLNDELY…KDLNRQALIR (61 aa). A helical; Anchor for type IV membrane protein transmembrane segment spans residues 193–213; the sequence is LIRKWAPVAIVFGVVFLLFWV. The Vesicular segment spans residues 214 to 218; it reads KNKLW.

The protein belongs to the synaptobrevin family. In terms of assembly, interacts with SEC24A. As to expression, mainly expressed in flowers and siliques, to a lower extent in seedlings, and barely in roots and leaves.

The protein resides in the golgi apparatus membrane. Its subcellular location is the endoplasmic reticulum membrane. V-SNARE involved in vesicle trafficking from the ER to the Golgi complex and required for early secretion. Involved in endoplasmic reticulum (ER) biogenesis and functions as well as for Golgi-stack integrity. Essential for gametophytes development. Involved in cesium Cs(+) accumulation, a non-essential cation. This is 25.3 kDa vesicle transport protein SEC22-1 from Arabidopsis thaliana (Mouse-ear cress).